Consider the following 473-residue polypeptide: ATP synthase subunit beta (473 aa).

153–160 (GGAGVGKT) lines the ATP pocket.

The protein belongs to the ATPase alpha/beta chains family. F-type ATPases have 2 components, CF(1) - the catalytic core - and CF(0) - the membrane proton channel. CF(1) has five subunits: alpha(3), beta(3), gamma(1), delta(1), epsilon(1). CF(0) has three main subunits: a(1), b(2) and c(9-12). The alpha and beta chains form an alternating ring which encloses part of the gamma chain. CF(1) is attached to CF(0) by a central stalk formed by the gamma and epsilon chains, while a peripheral stalk is formed by the delta and b chains.

It is found in the cell inner membrane. It carries out the reaction ATP + H2O + 4 H(+)(in) = ADP + phosphate + 5 H(+)(out). In terms of biological role, produces ATP from ADP in the presence of a proton gradient across the membrane. The catalytic sites are hosted primarily by the beta subunits. This Rickettsia bellii (strain OSU 85-389) protein is ATP synthase subunit beta.